Reading from the N-terminus, the 757-residue chain is 5-methyltetrahydropteroyltriglutamate--homocysteine methyltransferase (757 aa).

5-methyltetrahydropteroyltri-L-glutamate-binding positions include 17–20 (RELK) and lysine 117. Residues 434–436 (IGS) and glutamate 487 each bind L-homocysteine. L-methionine is bound by residues 434-436 (IGS) and glutamate 487. 5-methyltetrahydropteroyltri-L-glutamate is bound by residues 518–519 (RC) and tryptophan 564. Aspartate 602 serves as a coordination point for L-homocysteine. Aspartate 602 is a binding site for L-methionine. Glutamate 608 serves as a coordination point for 5-methyltetrahydropteroyltri-L-glutamate. Positions 644, 646, and 668 each coordinate Zn(2+). Histidine 697 functions as the Proton donor in the catalytic mechanism. Cysteine 729 is a Zn(2+) binding site.

The protein belongs to the vitamin-B12 independent methionine synthase family. Zn(2+) is required as a cofactor.

It catalyses the reaction 5-methyltetrahydropteroyltri-L-glutamate + L-homocysteine = tetrahydropteroyltri-L-glutamate + L-methionine. It functions in the pathway amino-acid biosynthesis; L-methionine biosynthesis via de novo pathway; L-methionine from L-homocysteine (MetE route): step 1/1. Catalyzes the transfer of a methyl group from 5-methyltetrahydrofolate to homocysteine resulting in methionine formation. The protein is 5-methyltetrahydropteroyltriglutamate--homocysteine methyltransferase of Proteus mirabilis (strain HI4320).